The chain runs to 365 residues: P43 5S RNA-binding protein (365 aa).

9 consecutive C2H2-type zinc fingers follow at residues 15–39, 45–69, 75–100, 106–130, 136–160, 163–187, 191–213, 220–245, and 251–275; these read FRCPAAGCKAVYRKEGKLRDHMAGH, WKCGKKDCGKMFARKRQIQKHMKRH, HSCPTAGCKMTFSTKKSLSRHKLYKH, LKCSVPGCKRSFRKKRALRIHVSEH, SVCDVPGCGWKSTSAAKLAAHHRRH, YRCSYEDCQTVSPTWTALQTHLKKH, LQCAACKKPFKKASALRRHKATH, LPCPRQDCDKIFSTVFNLTHHLRKVH, and HRCPHSNCTRSFAMRESLVRHLVVH.

As to quaternary structure, the 42S RNP particle comprises four subunits each of which contains one molecule of 5S RNA, three molecules of tRNA, two molecules of p50 (EF1-alpha) and one molecule of the 5S RNA binding protein 43.

P43 is a 5S RNA binding protein which is a major constituent of oocytes and comprises part of a 42S ribonucleoprotein storage particle. This is P43 5S RNA-binding protein from Xenopus borealis (Kenyan clawed frog).